A 108-amino-acid chain; its full sequence is Small ribosomal subunit protein bS6 (108 aa).

The protein belongs to the bacterial ribosomal protein bS6 family.

Its function is as follows. Binds together with bS18 to 16S ribosomal RNA. In Dichelobacter nodosus (strain VCS1703A), this protein is Small ribosomal subunit protein bS6.